The chain runs to 355 residues: UDP-N-acetylglucosamine--N-acetylmuramyl-(pentapeptide) pyrophosphoryl-undecaprenol N-acetylglucosamine transferase (355 aa).

UDP-N-acetyl-alpha-D-glucosamine is bound by residues 14–16, Asn-126, Arg-162, Ser-190, Ile-243, 262–267, and Gln-287; these read TGG and ALTVSE.

The protein belongs to the glycosyltransferase 28 family. MurG subfamily.

The protein localises to the cell inner membrane. It catalyses the reaction di-trans,octa-cis-undecaprenyl diphospho-N-acetyl-alpha-D-muramoyl-L-alanyl-D-glutamyl-meso-2,6-diaminopimeloyl-D-alanyl-D-alanine + UDP-N-acetyl-alpha-D-glucosamine = di-trans,octa-cis-undecaprenyl diphospho-[N-acetyl-alpha-D-glucosaminyl-(1-&gt;4)]-N-acetyl-alpha-D-muramoyl-L-alanyl-D-glutamyl-meso-2,6-diaminopimeloyl-D-alanyl-D-alanine + UDP + H(+). Its pathway is cell wall biogenesis; peptidoglycan biosynthesis. Functionally, cell wall formation. Catalyzes the transfer of a GlcNAc subunit on undecaprenyl-pyrophosphoryl-MurNAc-pentapeptide (lipid intermediate I) to form undecaprenyl-pyrophosphoryl-MurNAc-(pentapeptide)GlcNAc (lipid intermediate II). The protein is UDP-N-acetylglucosamine--N-acetylmuramyl-(pentapeptide) pyrophosphoryl-undecaprenol N-acetylglucosamine transferase of Vibrio vulnificus (strain CMCP6).